A 217-amino-acid chain; its full sequence is NADH-quinone oxidoreductase subunit I (217 aa).

A disordered region spans residues 22-41 (TTEQYPEEKKETAPRFHGRH). 4Fe-4S ferredoxin-type domains lie at 43-73 (LNRH…VEGA) and 89-118 (RVYQ…MSND). 8 residues coordinate [4Fe-4S] cluster: C53, C56, C59, C63, C98, C101, C104, and C108. Positions 193–217 (ARRTAGEHSRADEVPAHGAGSERPR) are disordered.

Belongs to the complex I 23 kDa subunit family. NDH-1 is composed of 14 different subunits. Subunits NuoA, H, J, K, L, M, N constitute the membrane sector of the complex. The cofactor is [4Fe-4S] cluster.

Its subcellular location is the cell membrane. The enzyme catalyses a quinone + NADH + 5 H(+)(in) = a quinol + NAD(+) + 4 H(+)(out). NDH-1 shuttles electrons from NADH, via FMN and iron-sulfur (Fe-S) centers, to quinones in the respiratory chain. The immediate electron acceptor for the enzyme in this species is believed to be ubiquinone. Couples the redox reaction to proton translocation (for every two electrons transferred, four hydrogen ions are translocated across the cytoplasmic membrane), and thus conserves the redox energy in a proton gradient. This chain is NADH-quinone oxidoreductase subunit I, found in Frankia casuarinae (strain DSM 45818 / CECT 9043 / HFP020203 / CcI3).